Here is a 162-residue protein sequence, read N- to C-terminus: MLKIGFGYDVHPFAENRRLILGGVVINHPKGYGLLGHSDGDVFFHALIDSLLGMCGLGSIGEYFPESKEFENISSSILLEKTIDLINKRYIVKINNIDVVIISKSVNISSITGQIKNNTSCILNLEVSRINLKGKSGNGLGVGGNDQGIEVYCTILGEIDEI.

A divalent metal cation is bound by residues Asp9 and His11. Residues 9-11 (DVH) and 37-38 (HS) contribute to the 4-CDP-2-C-methyl-D-erythritol 2-phosphate site. His45 contributes to the a divalent metal cation binding site.

This sequence belongs to the IspF family. Homotrimer. A divalent metal cation is required as a cofactor.

The catalysed reaction is 4-CDP-2-C-methyl-D-erythritol 2-phosphate = 2-C-methyl-D-erythritol 2,4-cyclic diphosphate + CMP. It functions in the pathway isoprenoid biosynthesis; isopentenyl diphosphate biosynthesis via DXP pathway; isopentenyl diphosphate from 1-deoxy-D-xylulose 5-phosphate: step 4/6. Its function is as follows. Involved in the biosynthesis of isopentenyl diphosphate (IPP) and dimethylallyl diphosphate (DMAPP), two major building blocks of isoprenoid compounds. Catalyzes the conversion of 4-diphosphocytidyl-2-C-methyl-D-erythritol 2-phosphate (CDP-ME2P) to 2-C-methyl-D-erythritol 2,4-cyclodiphosphate (ME-CPP) with a corresponding release of cytidine 5-monophosphate (CMP). The protein is 2-C-methyl-D-erythritol 2,4-cyclodiphosphate synthase of Petrotoga mobilis (strain DSM 10674 / SJ95).